A 200-amino-acid polypeptide reads, in one-letter code: Holliday junction branch migration complex subunit RuvA (200 aa).

Residues 1-63 (MIASVRGVVT…EDSLTLYGFA (63 aa)) are domain I. The domain II stretch occupies residues 64 to 142 (DDNAKALFEL…PVPVGGDGAA (79 aa)). A flexible linker region spans residues 143-151 (GVTTGAWPE). A domain III region spans residues 151-200 (EQVRQALVGLGWTAGQAEQAVAAVAETVDGEVPPVPVLLRQAIRLLGRTR).

It belongs to the RuvA family. As to quaternary structure, homotetramer. Forms an RuvA(8)-RuvB(12)-Holliday junction (HJ) complex. HJ DNA is sandwiched between 2 RuvA tetramers; dsDNA enters through RuvA and exits via RuvB. An RuvB hexamer assembles on each DNA strand where it exits the tetramer. Each RuvB hexamer is contacted by two RuvA subunits (via domain III) on 2 adjacent RuvB subunits; this complex drives branch migration. In the full resolvosome a probable DNA-RuvA(4)-RuvB(12)-RuvC(2) complex forms which resolves the HJ.

The protein localises to the cytoplasm. The RuvA-RuvB-RuvC complex processes Holliday junction (HJ) DNA during genetic recombination and DNA repair, while the RuvA-RuvB complex plays an important role in the rescue of blocked DNA replication forks via replication fork reversal (RFR). RuvA specifically binds to HJ cruciform DNA, conferring on it an open structure. The RuvB hexamer acts as an ATP-dependent pump, pulling dsDNA into and through the RuvAB complex. HJ branch migration allows RuvC to scan DNA until it finds its consensus sequence, where it cleaves and resolves the cruciform DNA. The sequence is that of Holliday junction branch migration complex subunit RuvA from Salinispora arenicola (strain CNS-205).